A 121-amino-acid polypeptide reads, in one-letter code: Large ribosomal subunit protein uL14 (121 aa).

This sequence belongs to the universal ribosomal protein uL14 family. As to quaternary structure, part of the 50S ribosomal subunit. Forms a cluster with proteins L3 and L19. In the 70S ribosome, L14 and L19 interact and together make contacts with the 16S rRNA in bridges B5 and B8.

Its function is as follows. Binds to 23S rRNA. Forms part of two intersubunit bridges in the 70S ribosome. In Synechococcus sp. (strain CC9902), this protein is Large ribosomal subunit protein uL14.